Here is a 1128-residue protein sequence, read N- to C-terminus: Major DNA-binding protein (1128 aa).

A required for nuclear localization region spans residues leucine 1104–valine 1128.

The protein belongs to the herpesviridae major DNA-binding protein family. As to quaternary structure, homooligomers. Forms double-helical filaments necessary for the formation of replication compartments within the host nucleus. Interacts with the origin-binding protein. Interacts with the helicase primase complex; this interaction stimulates primer synthesis activity of the helicase-primase complex. Interacts with the DNA polymerase. Interacts with the alkaline exonuclease; this interaction increases its nuclease processivity.

It localises to the virion tegument. It is found in the host nucleus. In terms of biological role, plays several crucial roles in viral infection. Participates in the opening of the viral DNA origin to initiate replication by interacting with the origin-binding protein. May disrupt loops, hairpins and other secondary structures present on ssDNA to reduce and eliminate pausing of viral DNA polymerase at specific sites during elongation. Promotes viral DNA recombination by performing strand-transfer, characterized by the ability to transfer a DNA strand from a linear duplex to a complementary single-stranded DNA circle. Can also catalyze the renaturation of complementary single strands. Additionally, reorganizes the host cell nucleus, leading to the formation of prereplicative sites and replication compartments. This process is driven by the protein which can form double-helical filaments in the absence of DNA. The protein is Major DNA-binding protein of Epstein-Barr virus (strain GD1) (HHV-4).